A 105-amino-acid chain; its full sequence is Urease subunit beta (105 aa).

It belongs to the urease beta subunit family. As to quaternary structure, heterotrimer of UreA (gamma), UreB (beta) and UreC (alpha) subunits. Three heterotrimers associate to form the active enzyme.

The protein resides in the cytoplasm. It carries out the reaction urea + 2 H2O + H(+) = hydrogencarbonate + 2 NH4(+). Its pathway is nitrogen metabolism; urea degradation; CO(2) and NH(3) from urea (urease route): step 1/1. The protein is Urease subunit beta of Marinomonas sp. (strain MWYL1).